The primary structure comprises 645 residues: Putative galactocerebrosidase (645 aa).

An N-terminal signal peptide occupies residues 1–16 (MFSIFIKIILILPSIA). Threonine 87 and tryptophan 128 together coordinate substrate. A glycan (N-linked (GlcNAc...) asparagine) is linked at asparagine 141. Asparagine 171 is a substrate binding site. Glutamate 172 acts as the Proton donor/acceptor in catalysis. Residues asparagine 174 and asparagine 193 are each glycosylated (N-linked (GlcNAc...) asparagine). Glutamate 248 (nucleophile) is an active-site residue. A disulfide bridge connects residues cysteine 261 and cysteine 365. Residues asparagine 274, asparagine 395, asparagine 411, asparagine 532, asparagine 616, asparagine 620, and asparagine 638 are each glycosylated (N-linked (GlcNAc...) asparagine).

The protein belongs to the glycosyl hydrolase 59 family.

The catalysed reaction is a beta-D-Gal-(1&lt;-&gt;1')-ceramide + H2O = an N-acyl-sphingoid base + D-galactose. The enzyme catalyses a beta-D-galactosyl-(1&lt;-&gt;1')-N-acylsphing-4-enine + H2O = an N-acylsphing-4-enine + D-galactose. In terms of biological role, hydrolyzes the galactose ester bonds of galactosylceramide, galactosylsphingoid base, lactosylceramide, and monogalactosyldiglyceride. C.elegans contain specific sphingoid bases, which are unique or different in structure compared to the sphingoid bases found in other animals. Two examples of these distinctive compounds are: 15-methylhexadecasphinganine and 15-methylhexadecasphing-4-enine. In Caenorhabditis elegans, this protein is Putative galactocerebrosidase.